The sequence spans 343 residues: Fc receptor-like protein 1 (343 aa).

The N-terminal stretch at 1 to 16 is a signal peptide; sequence MLPWLLLLICALPCEP. Ig-like C2-type domains lie at 17 to 109 and 117 to 200; these read AGIS…VSIH and PVLT…EVVA. Residues 17-219 lie on the Extracellular side of the membrane; that stretch reads AGISDVSLKT…PTENGISHLS (203 aa). The N-linked (GlcNAc...) asparagine glycan is linked to Asn-51. A disulfide bridge connects residues Cys-138 and Cys-185. N-linked (GlcNAc...) asparagine glycosylation occurs at Asn-202. The helical transmembrane segment at 220 to 240 threads the bilayer; it reads LGLTGWLLGCLSPITMALIFC. At 241–343 the chain is on the cytoplasmic side; sequence YWLKRKIGRQ…IAHMDYEDAM (103 aa). Residues 251–278 form a disordered region; it reads SEDPVRSPPQTVLQGSTYPKSPDSRQPE. A compositionally biased stretch (polar residues) spans 258–269; the sequence is PPQTVLQGSTYP. Short sequence motifs (ITIM motif) lie at residues 266–271, 279–284, and 291–296; these read STYPKS, PLYENV, and EVYSLV. Tyr-281 bears the Phosphotyrosine mark. Residue Tyr-297 is modified to Phosphotyrosine. 2 consecutive short sequence motifs (ITIM motif) follow at residues 325–330 and 337–342; these read GLYSKP and MDYEDA.

Interacts with ABL1. Interacts with GRB2 and SOS1. Interacts with SHIP-1/INPP5D. Phosphorylated on C-terminal region upon BCR ligation leading to recruitment of ABL1. As to expression, widely expressed. Expressed in B-cells at the various stages of differentiation.

Its subcellular location is the cell membrane. May function as an activating coreceptor in B-cells. May function in B-cells activation and differentiation. The chain is Fc receptor-like protein 1 (Fcrl1) from Mus musculus (Mouse).